The chain runs to 353 residues: MKLGARIFKTGIAITLALYLASWIGLPAPIFAGIAAIFAIQPSIYRSFLIIIDQVQANIIGAVIATVFGLIFGPSPIMIGLTAVIVITIMLKLKIEHTISIALVTVIAILESAGDDFLMFALIRTSTVILGVLSSFIVNLVFLPPKYETKLIHNTVENTEEIMKWIRLSMRQSTEHSILKEDIEKLKEKMIKLDQTYLLYKEERSYFKKTTYVKSRKLVLFRQAIITANRALDTLKKLHRLENEIYHMPEEFQETLTEELDYLLYWHERILMRFVGKIKPHDDAVEEGIRYKQLLTKSFLKNQQNTDEELIDYNMLNIMASAVEYREQLEHLETLITSFQTYHPKDCEIETEE.

A run of 4 helical transmembrane segments spans residues Leu20 to Ile40, Val67 to Ile87, Leu103 to Ile123, and Thr125 to Pro145.

It belongs to the UPF0421 family.

The protein localises to the cell membrane. The chain is UPF0421 protein YgaE (ygaE) from Bacillus subtilis (strain 168).